Reading from the N-terminus, the 376-residue chain is 23S rRNA (uracil(747)-C(5))-methyltransferase RlmC (376 aa).

Positions 3, 11, 14, and 87 each coordinate [4Fe-4S] cluster. Residues Gln212, Phe241, Glu262, and Asn307 each coordinate S-adenosyl-L-methionine. The Nucleophile role is filled by Cys334.

Belongs to the class I-like SAM-binding methyltransferase superfamily. RNA M5U methyltransferase family. RlmC subfamily.

It carries out the reaction uridine(747) in 23S rRNA + S-adenosyl-L-methionine = 5-methyluridine(747) in 23S rRNA + S-adenosyl-L-homocysteine + H(+). Its function is as follows. Catalyzes the formation of 5-methyl-uridine at position 747 (m5U747) in 23S rRNA. This chain is 23S rRNA (uracil(747)-C(5))-methyltransferase RlmC, found in Yersinia pseudotuberculosis serotype I (strain IP32953).